The sequence spans 958 residues: Unconventional myosin-Ih (958 aa).

The Myosin motor domain occupies 12 to 691; sequence GVQDFVLLDA…TLFATEDAFE (680 aa). ATP is bound at residue 105–112; sequence GESGAGKT. Ser365 carries the phosphoserine modification. Residues 568–590 are actin-binding; the sequence is LSSLLEILISKEPSYIRCIKPNE. IQ domains follow at residues 694 to 716 and 717 to 746; these read KHQL…EYMK and KRQA…AVQI. Residues 773–955 enclose the TH1 domain; it reads RKNYILNLRY…NGQLRVVSAG (183 aa).

Belongs to the TRAFAC class myosin-kinesin ATPase superfamily. Myosin family. In terms of tissue distribution, highly expressed in the central nervous system, including the forebrain, midbrain and lower medulla. In the lower medulla, it is broadly expressed throughout the reticular formation. It is expressed in the retrotrapezoid nucleus and the nucleus of the solitary tract, as well as motor neurons of the facial, vagal and ambiguus nuclei. Expressed in neonatal inner-ear organs.

Myosins are actin-based motor molecules with ATPase activity. Unconventional myosins serve in intracellular movements. Their highly divergent tails are presumed to bind to membranous compartments, which would be moved relative to actin filaments. In Mus musculus (Mouse), this protein is Unconventional myosin-Ih (Myo1h).